Here is a 529-residue protein sequence, read N- to C-terminus: 3-ketoacyl-CoA synthase 20 (529 aa).

The interval 1–22 (MSHNQNQPHRPVPVHVTNAEPN) is disordered. 2 helical membrane-spanning segments follow: residues 52 to 72 (LYIL…SFTI) and 84 to 104 (FHFL…TAYF). One can recognise an FAE domain in the interval 103 to 396 (YFTTRPRRVF…FFATLVARKV (294 aa)). Residues Cys247, His326, His415, His419, and Asn452 contribute to the active site.

The protein belongs to the thiolase-like superfamily. Chalcone/stilbene synthases family. In terms of tissue distribution, expressed in aerial organs. Expressed in leaves, flowers, siliques and stems. Expressed in roots, young seedlings, leaves, flowers and siliques.

The protein localises to the membrane. The catalysed reaction is a very-long-chain acyl-CoA + malonyl-CoA + H(+) = a very-long-chain 3-oxoacyl-CoA + CO2 + CoA. It functions in the pathway lipid metabolism; fatty acid biosynthesis. Inhibited by K3 herbicides such as alachlor, allidochlor, anilofos, cafenstrole, fentrazamide and flufenacet. Strongly inhibited by metazachlor and only slightly by mefluidide. Functionally, mediates the synthesis of VLCFAs from 22 to 26 carbons in length (e.g. C22, C24, C26). Functionally redundant with KCS2 in the two-carbon elongation of C22 fatty acids that is required for cuticular wax and root suberin biosynthesis. This is 3-ketoacyl-CoA synthase 20 from Arabidopsis thaliana (Mouse-ear cress).